Consider the following 147-residue polypeptide: Large ribosomal subunit protein bL9 (147 aa).

Belongs to the bacterial ribosomal protein bL9 family.

Binds to the 23S rRNA. This is Large ribosomal subunit protein bL9 from Clostridium tetani (strain Massachusetts / E88).